A 168-amino-acid polypeptide reads, in one-letter code: Disulfide bond formation protein B 2 (168 aa).

Over 1–14 (MSAPIGATRAERWT) the chain is Cytoplasmic. A helical membrane pass occupies residues 15-31 (LLAIGVASFELVAGALW). The Periplasmic portion of the chain corresponds to 32–49 (IQLAWQEDPCPLCIIQRY). C41 and C44 form a disulfide bridge. The chain crosses the membrane as a helical span at residues 50-64 (LFLLIALFTFVAAAG). Residues 65–69 (GRRVA) are Cytoplasmic-facing. The chain crosses the membrane as a helical span at residues 70–87 (LLRVLSLTTALAGAAVAV). Topologically, residues 88–142 (RHIYVQAHPGFSCGFDALQPVIDSLPPAHWLPPVFKVGGLCETLYPPILGLSLPM) are periplasmic. C100 and C128 are oxidised to a cystine. The helical transmembrane segment at 143–161 (WALVGFSAIAVALGWRIRA) threads the bilayer. Residues 162–168 (QAVIRTA) lie on the Cytoplasmic side of the membrane.

Belongs to the DsbB family.

The protein localises to the cell inner membrane. Functionally, required for disulfide bond formation in some periplasmic proteins. Acts by oxidizing the DsbA protein. The sequence is that of Disulfide bond formation protein B 2 from Burkholderia lata (strain ATCC 17760 / DSM 23089 / LMG 22485 / NCIMB 9086 / R18194 / 383).